Consider the following 307-residue polypeptide: Ornithine carbamoyltransferase (307 aa).

Residues 53 to 56 (STRT), Q80, R104, and 131 to 134 (HPCQ) contribute to the carbamoyl phosphate site. L-ornithine-binding positions include N162, D220, and 224–225 (SM). Carbamoyl phosphate contacts are provided by residues 260 to 261 (CL) and R288.

It belongs to the aspartate/ornithine carbamoyltransferase superfamily. OTCase family.

It localises to the cytoplasm. It catalyses the reaction carbamoyl phosphate + L-ornithine = L-citrulline + phosphate + H(+). Its pathway is amino-acid biosynthesis; L-arginine biosynthesis; L-arginine from L-ornithine and carbamoyl phosphate: step 1/3. In terms of biological role, reversibly catalyzes the transfer of the carbamoyl group from carbamoyl phosphate (CP) to the N(epsilon) atom of ornithine (ORN) to produce L-citrulline. This is Ornithine carbamoyltransferase from Nitrosomonas europaea (strain ATCC 19718 / CIP 103999 / KCTC 2705 / NBRC 14298).